Consider the following 254-residue polypeptide: Protein EFFECTOR OF TRANSCRIPTION 3 (254 aa).

One can recognise a GIY-YIG domain in the interval 103-152 (RCTGLYELGVGVIGQDQGQNFDPDNNVLGVYVGQCVDVKSRLQDYGRRGG).

It localises to the cytoplasm. This chain is Protein EFFECTOR OF TRANSCRIPTION 3, found in Arabidopsis thaliana (Mouse-ear cress).